Consider the following 276-residue polypeptide: Pantothenate synthetase (276 aa).

An ATP-binding site is contributed by 26–33 (MGYLHEGH). His33 serves as the catalytic Proton donor. Position 57 (Gln57) interacts with (R)-pantoate. Gln57 provides a ligand contact to beta-alanine. 142–145 (GLKD) lines the ATP pocket. Gln148 contacts (R)-pantoate. Residues Ile171 and 179–182 (KSSR) each bind ATP.

It belongs to the pantothenate synthetase family. In terms of assembly, homodimer.

The protein resides in the cytoplasm. It carries out the reaction (R)-pantoate + beta-alanine + ATP = (R)-pantothenate + AMP + diphosphate + H(+). It participates in cofactor biosynthesis; (R)-pantothenate biosynthesis; (R)-pantothenate from (R)-pantoate and beta-alanine: step 1/1. In terms of biological role, catalyzes the condensation of pantoate with beta-alanine in an ATP-dependent reaction via a pantoyl-adenylate intermediate. This is Pantothenate synthetase from Exiguobacterium sp. (strain ATCC BAA-1283 / AT1b).